Here is a 129-residue protein sequence, read N- to C-terminus: MALLFENMCNFPGFDPHSGEFELPKRFCSNNSLSLFSTPVMFHSYKSALVDTCRYTTDDNSTDDSYLRYGDEFSIATKTEKARQKTVSKKYKSRKGRRYTRERNISSEKNKTDKSHKVRVGKIQNINND.

Residues 84–98 (QKTVSKKYKSRKGRR) are compositionally biased toward basic residues. Residues 84–129 (QKTVSKKYKSRKGRRYTRERNISSEKNKTDKSHKVRVGKIQNINND) are disordered. Positions 99 to 115 (YTRERNISSEKNKTDKS) are enriched in basic and acidic residues.

This is an uncharacterized protein from Acanthamoeba polyphaga mimivirus (APMV).